The primary structure comprises 539 residues: Phospho-2-dehydro-3-deoxyheptonate aldolase 2, chloroplastic (539 aa).

Disordered regions lie at residues Met1–Gln23 and Val41–Lys70. The transit peptide at Met1 to Gln54 directs the protein to the chloroplast. Residues Ser7 to Ala21 are compositionally biased toward low complexity.

It belongs to the class-II DAHP synthase family.

The protein localises to the plastid. It localises to the chloroplast. It catalyses the reaction D-erythrose 4-phosphate + phosphoenolpyruvate + H2O = 7-phospho-2-dehydro-3-deoxy-D-arabino-heptonate + phosphate. Its pathway is metabolic intermediate biosynthesis; chorismate biosynthesis; chorismate from D-erythrose 4-phosphate and phosphoenolpyruvate: step 1/7. The protein is Phospho-2-dehydro-3-deoxyheptonate aldolase 2, chloroplastic (DAHPS2) of Oryza sativa subsp. japonica (Rice).